We begin with the raw amino-acid sequence, 115 residues long: Cyclin-dependent protein kinase inhibitor SMR3 (115 aa).

Residues 17–36 are compositionally biased toward basic and acidic residues; sequence KIRLPTRPELDIPDSDHEDP. The disordered stretch occupies residues 17 to 82; the sequence is KIRLPTRPEL…RSSGTKRKLT (66 aa). Over residues 67 to 81 the composition is skewed to basic residues; that stretch reads RKPKPNRSSGTKRKL.

Interacts with CDKA-1 and D-type cyclins. As to expression, expressed at low levels in roots and stems.

The protein localises to the nucleus. Functionally, probable cyclin-dependent protein kinase (CDK) inhibitor that functions as a repressor of mitosis in the endoreduplication cell cycle. In Arabidopsis thaliana (Mouse-ear cress), this protein is Cyclin-dependent protein kinase inhibitor SMR3.